A 218-amino-acid chain; its full sequence is Putative NAD(P)H nitroreductase SH0546 (218 aa).

Belongs to the nitroreductase family. Requires FMN as cofactor.

This is Putative NAD(P)H nitroreductase SH0546 from Staphylococcus haemolyticus (strain JCSC1435).